Reading from the N-terminus, the 492-residue chain is Bifunctional purine biosynthesis protein PurH (492 aa).

The region spanning 1–144 (MKKAILSVSN…KNYKHVTTIV (144 aa)) is the MGS-like domain.

It belongs to the PurH family.

It carries out the reaction (6R)-10-formyltetrahydrofolate + 5-amino-1-(5-phospho-beta-D-ribosyl)imidazole-4-carboxamide = 5-formamido-1-(5-phospho-D-ribosyl)imidazole-4-carboxamide + (6S)-5,6,7,8-tetrahydrofolate. The enzyme catalyses IMP + H2O = 5-formamido-1-(5-phospho-D-ribosyl)imidazole-4-carboxamide. It functions in the pathway purine metabolism; IMP biosynthesis via de novo pathway; 5-formamido-1-(5-phospho-D-ribosyl)imidazole-4-carboxamide from 5-amino-1-(5-phospho-D-ribosyl)imidazole-4-carboxamide (10-formyl THF route): step 1/1. It participates in purine metabolism; IMP biosynthesis via de novo pathway; IMP from 5-formamido-1-(5-phospho-D-ribosyl)imidazole-4-carboxamide: step 1/1. In Staphylococcus aureus (strain Newman), this protein is Bifunctional purine biosynthesis protein PurH.